The following is a 398-amino-acid chain: Beta-1,6-galactosyltransferase GALT29A (398 aa).

The Cytoplasmic portion of the chain corresponds to 1-6 (MKRSVR). Residues 7–27 (PLFSALLFAFFAATLICRVAI) form a helical; Signal-anchor for type II membrane protein membrane-spanning segment. Topologically, residues 28–398 (RRSSFSFASA…FKIPLVQVYH (371 aa)) are lumenal. 2 N-linked (GlcNAc...) asparagine glycosylation sites follow: Asn-221 and Asn-346.

Belongs to the glycosyltransferase 29 family. As to quaternary structure, interacts with GALT31A.

It is found in the golgi apparatus membrane. Galactosyltransferase involved in the biosynthesis of type II arabinogalactan. Possesses galactosyltransferase (GalT) activity in vitro, transferring galactose from UDP-galactose to a mixture of various oligosaccharides derived from arabinogalactan proteins. Forms a complex with GALT31A that can work cooperatively to enhance the activities of adding galactose residues at O6 positions to beta-1,6-galactan and beta-1,3-galactan. The chain is Beta-1,6-galactosyltransferase GALT29A from Arabidopsis thaliana (Mouse-ear cress).